Consider the following 276-residue polypeptide: Shikimate dehydrogenase (NADP(+)) (276 aa).

Shikimate is bound by residues 18-20 (SKS) and Thr-65. Lys-69 serves as the catalytic Proton acceptor. Residue Glu-81 participates in NADP(+) binding. Shikimate is bound by residues Asn-90 and Asp-106. NADP(+) is bound by residues 130–134 (GAGGA), 154–159 (NRTSSK), and Met-217. Tyr-219 is a binding site for shikimate. Position 241 (Gly-241) interacts with NADP(+).

Belongs to the shikimate dehydrogenase family. In terms of assembly, homodimer.

The enzyme catalyses shikimate + NADP(+) = 3-dehydroshikimate + NADPH + H(+). It participates in metabolic intermediate biosynthesis; chorismate biosynthesis; chorismate from D-erythrose 4-phosphate and phosphoenolpyruvate: step 4/7. Its function is as follows. Involved in the biosynthesis of the chorismate, which leads to the biosynthesis of aromatic amino acids. Catalyzes the reversible NADPH linked reduction of 3-dehydroshikimate (DHSA) to yield shikimate (SA). The protein is Shikimate dehydrogenase (NADP(+)) of Vibrio atlanticus (strain LGP32) (Vibrio splendidus (strain Mel32)).